We begin with the raw amino-acid sequence, 299 residues long: Glycine--tRNA ligase alpha subunit (299 aa).

This sequence belongs to the class-II aminoacyl-tRNA synthetase family. Tetramer of two alpha and two beta subunits.

The protein resides in the cytoplasm. The enzyme catalyses tRNA(Gly) + glycine + ATP = glycyl-tRNA(Gly) + AMP + diphosphate. In Caulobacter vibrioides (strain ATCC 19089 / CIP 103742 / CB 15) (Caulobacter crescentus), this protein is Glycine--tRNA ligase alpha subunit.